The chain runs to 315 residues: uncharacterized protein (315 aa).

Positions 296–308 are enriched in basic residues; that stretch reads RSKLRKGTHKRTP. The disordered stretch occupies residues 296-315; it reads RSKLRKGTHKRTPGRAGDAD.

The protein belongs to the metallo-dependent hydrolases superfamily. Peptidase M19 family.

This is an uncharacterized protein from Acinetobacter calcoaceticus.